Consider the following 563-residue polypeptide: O-fucosyltransferase 14 (563 aa).

Over residues 1–16 the composition is skewed to low complexity; it reads MVKVSSSTTSSSSSSS. Residues 1 to 25 are disordered; it reads MVKVSSSTTSSSSSSSPDEESDLQN. Residues 73–93 traverse the membrane as a helical; Signal-anchor for type II membrane protein segment; it reads IFIFLPIVIILIYLSTDFSNY. N-linked (GlcNAc...) asparagine glycans are attached at residues asparagine 135, asparagine 140, and asparagine 339. Substrate is bound by residues 412–414 and 528–529; these read HFR and TF.

This sequence belongs to the glycosyltransferase GT106 family.

The protein resides in the membrane. The protein operates within glycan metabolism. This Arabidopsis thaliana (Mouse-ear cress) protein is O-fucosyltransferase 14.